Here is a 478-residue protein sequence, read N- to C-terminus: Hexokinase (478 aa).

Positions 21 to 465 (EYLLKELTEL…LGAGAAIIAA (445 aa)) constitute a Hexokinase domain. A hexokinase small subdomain region spans residues 75 to 208 (TGKEMGDYLA…KVPIEVVALI (134 aa)). Lysine 111 serves as a coordination point for ATP. The segment at 151 to 177 (PLGFTFSYPASQGSINEGYLQRWTKGF) is glucose-binding. The tract at residues 209 to 454 (NDTTGTLVAS…DPIVIVPAED (246 aa)) is hexokinase large subdomain.

It belongs to the hexokinase family. As to quaternary structure, monomer.

The catalysed reaction is a D-hexose + ATP = a D-hexose 6-phosphate + ADP + H(+). It carries out the reaction D-fructose + ATP = D-fructose 6-phosphate + ADP + H(+). The enzyme catalyses D-glucose + ATP = D-glucose 6-phosphate + ADP + H(+). It participates in carbohydrate metabolism; hexose metabolism. The protein operates within carbohydrate degradation; glycolysis; D-glyceraldehyde 3-phosphate and glycerone phosphate from D-glucose: step 1/4. In terms of biological role, catalyzes the phosphorylation of hexose, such as D-glucose and D-fructose, to hexose 6-phosphate (D-glucose 6-phosphate and D-fructose 6-phosphate, respectively). Mediates the initial step of glycolysis by catalyzing phosphorylation of D-glucose to D-glucose 6-phosphate. This chain is Hexokinase (HXK), found in Schwanniomyces occidentalis (Yeast).